A 151-amino-acid chain; its full sequence is Caveolin-3 (151 aa).

Residues 1-83 (MMTEEHTDLE…RLLSTLLGVP (83 aa)) lie on the Cytoplasmic side of the membrane. A Glycyl lysine isopeptide (Lys-Gly) (interchain with G-Cter in SUMO3) cross-link involves residue Lys38. The tract at residues 64–114 (TFTVSKYWCYRLLSTLLGVPLALLWGFLFACISFCHIWAVVPCIKSYLIEI) is required for interaction with DAG1. An intramembrane region (helical) is located at residues 84 to 104 (LALLWGFLFACISFCHIWAVV). At 105-151 (PCIKSYLIEIQCISHIYSLCIRTFCNPLFAALGQVCSNIKVVLRREG) the chain is on the cytoplasmic side.

This sequence belongs to the caveolin family. Homooligomer. Interacts with DYSF. Interacts with DLG1 and KCNA5; forms a ternary complex. Interacts with DAG1 (via its C-terminal); the interaction prevents binding of DAG1 with DMD. Interacts with TRIM72. Interacts with MUSK; may regulate MUSK signaling. Interacts with POPDC1. Interacts with CAVIN1, CAVIN2 and CAVIN4. Post-translationally, sumoylation with SUMO3 by PIAS4 may reduce agonist-induced internalization and desensitization of adrenergic receptor ABRD2. In terms of tissue distribution, expressed predominantly in muscle.

It localises to the golgi apparatus membrane. The protein localises to the cell membrane. The protein resides in the membrane. Its subcellular location is the caveola. It is found in the sarcolemma. May act as a scaffolding protein within caveolar membranes. Interacts directly with G-protein alpha subunits and can functionally regulate their activity. May also regulate voltage-gated potassium channels. Plays a role in the sarcolemma repair mechanism of both skeletal muscle and cardiomyocytes that permits rapid resealing of membranes disrupted by mechanical stress. Mediates the recruitment of CAVIN2 and CAVIN3 proteins to the caveolae. In Mus musculus (Mouse), this protein is Caveolin-3.